The sequence spans 766 residues: Phosphoribosylformylglycinamidine synthase subunit PurL (766 aa).

Residue His49 is part of the active site. 2 residues coordinate ATP: Tyr52 and Lys91. A Mg(2+)-binding site is contributed by Glu93. Residues 94–97 (SHNH) and Arg116 contribute to the substrate site. Catalysis depends on His95, which acts as the Proton acceptor. Asp117 contacts Mg(2+). Gln240 contacts substrate. Mg(2+) is bound at residue Asp268. Residue 312–314 (ESQ) coordinates substrate. Positions 508 and 545 each coordinate ATP. Position 546 (Asn546) interacts with Mg(2+). Residue Ser548 coordinates substrate.

The protein belongs to the FGAMS family. As to quaternary structure, monomer. Part of the FGAM synthase complex composed of 1 PurL, 1 PurQ and 2 PurS subunits.

The protein localises to the cytoplasm. It carries out the reaction N(2)-formyl-N(1)-(5-phospho-beta-D-ribosyl)glycinamide + L-glutamine + ATP + H2O = 2-formamido-N(1)-(5-O-phospho-beta-D-ribosyl)acetamidine + L-glutamate + ADP + phosphate + H(+). It participates in purine metabolism; IMP biosynthesis via de novo pathway; 5-amino-1-(5-phospho-D-ribosyl)imidazole from N(2)-formyl-N(1)-(5-phospho-D-ribosyl)glycinamide: step 1/2. In terms of biological role, part of the phosphoribosylformylglycinamidine synthase complex involved in the purines biosynthetic pathway. Catalyzes the ATP-dependent conversion of formylglycinamide ribonucleotide (FGAR) and glutamine to yield formylglycinamidine ribonucleotide (FGAM) and glutamate. The FGAM synthase complex is composed of three subunits. PurQ produces an ammonia molecule by converting glutamine to glutamate. PurL transfers the ammonia molecule to FGAR to form FGAM in an ATP-dependent manner. PurS interacts with PurQ and PurL and is thought to assist in the transfer of the ammonia molecule from PurQ to PurL. The sequence is that of Phosphoribosylformylglycinamidine synthase subunit PurL from Synechococcus sp. (strain CC9902).